Here is a 1887-residue protein sequence, read N- to C-terminus: Bifunctional serine/threonine-protein kinase/NEDD4-like E3 ubiquitin-protein ligase (1887 aa).

2 disordered regions span residues 19-55 (TPQV…TTNF) and 72-98 (TDNY…TKEN). 2 stretches are compositionally biased toward low complexity: residues 26–54 (NNSN…STTN) and 72–97 (TDNY…NTKE). RCC1 repeat units follow at residues 206 to 260 (QGNL…ALTI), 262 to 314 (GKVY…NNNN), 356 to 409 (KGLL…VLTN), 411 to 470 (GLVF…AISD), 472 to 528 (NDTY…AMSI), and 529 to 581 (DGSL…IVEK). The disordered stretch occupies residues 299–333 (NNNNNNNNNNSTNNNNNNNNDGAQQQFSLSQNSSS). Disordered stretches follow at residues 594-619 (LPSS…SDSN), 823-858 (VLVH…KNGT), and 1030-1088 (DDDN…NNNN). The segment covering 825 to 839 (VHQDEKQQQREKSET) has biased composition (basic and acidic residues). The span at 840–852 (ELEEEQDEEEEDS) shows a compositional bias: acidic residues. Residues 1036 to 1088 (ENNSVNNNSNNNNNNNNNNNNNNNNNNNNNNNIDNNINSNSINDSSNNNNNNN) show a composition bias toward low complexity. The 280-residue stretch at 1158 to 1437 (YDIIKTLSTH…AHQIAVHPYF (280 aa)) folds into the Protein kinase domain. ATP contacts are provided by residues 1164 to 1172 (LSTHPHNVY) and Lys1184. Asp1281 acts as the Proton acceptor in catalysis. One can recognise an HECT domain in the interval 1501-1887 (ESNKLFCRLE…LEYVDGFAFI (387 aa)). Residues 1586 to 1628 (NNNNNNEENNNNNNNNNNNNNNNNNNNNNNNNNNNNNNNNNEE) are disordered. Catalysis depends on Cys1855, which acts as the Glycyl thioester intermediate.

The protein in the N-terminal section; belongs to the protein kinase superfamily. Ser/Thr protein kinase family. It in the C-terminal section; belongs to the protein kinase superfamily. CAMK Ser/Thr protein kinase family.

It catalyses the reaction L-seryl-[protein] + ATP = O-phospho-L-seryl-[protein] + ADP + H(+). The enzyme catalyses L-threonyl-[protein] + ATP = O-phospho-L-threonyl-[protein] + ADP + H(+). The catalysed reaction is S-ubiquitinyl-[E2 ubiquitin-conjugating enzyme]-L-cysteine + [acceptor protein]-L-lysine = [E2 ubiquitin-conjugating enzyme]-L-cysteine + N(6)-ubiquitinyl-[acceptor protein]-L-lysine.. It participates in protein modification; protein ubiquitination. This Dictyostelium discoideum (Social amoeba) protein is Bifunctional serine/threonine-protein kinase/NEDD4-like E3 ubiquitin-protein ligase.